A 709-amino-acid chain; its full sequence is Ribosomal RNA large subunit methyltransferase K/L (709 aa).

A THUMP domain is found at leucine 43 to phenylalanine 154.

Belongs to the methyltransferase superfamily. RlmKL family.

It localises to the cytoplasm. It catalyses the reaction guanosine(2445) in 23S rRNA + S-adenosyl-L-methionine = N(2)-methylguanosine(2445) in 23S rRNA + S-adenosyl-L-homocysteine + H(+). The catalysed reaction is guanosine(2069) in 23S rRNA + S-adenosyl-L-methionine = N(2)-methylguanosine(2069) in 23S rRNA + S-adenosyl-L-homocysteine + H(+). Functionally, specifically methylates the guanine in position 2445 (m2G2445) and the guanine in position 2069 (m7G2069) of 23S rRNA. The chain is Ribosomal RNA large subunit methyltransferase K/L from Shewanella sp. (strain W3-18-1).